Reading from the N-terminus, the 205-residue chain is 3-demethoxyubiquinol 3-hydroxylase (205 aa).

Fe cation is bound by residues glutamate 54, glutamate 84, histidine 87, glutamate 136, glutamate 168, and histidine 171.

It belongs to the COQ7 family. The cofactor is Fe cation.

The protein localises to the cell membrane. The enzyme catalyses a 5-methoxy-2-methyl-3-(all-trans-polyprenyl)benzene-1,4-diol + AH2 + O2 = a 3-demethylubiquinol + A + H2O. It participates in cofactor biosynthesis; ubiquinone biosynthesis. Its function is as follows. Catalyzes the hydroxylation of 2-nonaprenyl-3-methyl-6-methoxy-1,4-benzoquinol during ubiquinone biosynthesis. This is 3-demethoxyubiquinol 3-hydroxylase from Delftia acidovorans (strain DSM 14801 / SPH-1).